Here is a 389-residue protein sequence, read N- to C-terminus: MNSTEEIDLYNRWKALERQLEMLDLQEGFIKEDCKSLKRELIRAQEEVKRIQSVPLVIGQFLEAIDQNTAIVGSTTGSNYVVRILSTLDRELLKPSASVALQRHSNALVDILPPEADSSISMLRPDERPDVSYADVGGLDVQKQEVREAVELPLTQGDLYRQIGIDPPRGVLLYGPPGTGKTMLVKAVANSTAANFIRVVGSEFVQKYLGEGPRMVRDVFRMARENAPAIIFIDEIDAIATKRFDAQTGADREVQRILIELLTQMDGFDQGANVKVIMATNRADTLDPALLRPGRLDRKIEFPSYRDRRQRRLVFQTITAKMLLSPEVDLDTFIMRPDASSGAQIAAIMQDAGLLAVRKSRGVILQSDIEEAYARAVKPTDMEQFAFYK.

175-182 is an ATP binding site; the sequence is GPPGTGKT.

It belongs to the AAA ATPase family.

It is found in the cytoplasm. Its subcellular location is the nucleus. Functionally, the 26S proteasome is involved in the ATP-dependent degradation of ubiquitinated proteins. The regulatory (or ATPase) complex confers ATP dependency and substrate specificity to the 26S complex. This Schizosaccharomyces pombe (strain 972 / ATCC 24843) (Fission yeast) protein is 26S proteasome regulatory subunit 6B homolog (rpt3).